Consider the following 135-residue polypeptide: Histone H2A.4 (135 aa).

This sequence belongs to the histone H2A family. As to quaternary structure, the nucleosome is a histone octamer containing two molecules each of H2A, H2B, H3 and H4 assembled in one H3-H4 heterotetramer and two H2A-H2B heterodimers. The octamer wraps approximately 147 bp of DNA. In terms of tissue distribution, expressed preferentially in meristematic tissues of young seedlings, in stigma and ovary but not in pollen.

It localises to the nucleus. The protein resides in the chromosome. In terms of biological role, core component of nucleosome. Nucleosomes wrap and compact DNA into chromatin, limiting DNA accessibility to the cellular machineries which require DNA as a template. Histones thereby play a central role in transcription regulation, DNA repair, DNA replication and chromosomal stability. DNA accessibility is regulated via a complex set of post-translational modifications of histones, also called histone code, and nucleosome remodeling. This is Histone H2A.4 (TH254) from Triticum aestivum (Wheat).